A 286-amino-acid polypeptide reads, in one-letter code: ATP synthase gamma chain (286 aa).

This sequence belongs to the ATPase gamma chain family. As to quaternary structure, F-type ATPases have 2 components, CF(1) - the catalytic core - and CF(0) - the membrane proton channel. CF(1) has five subunits: alpha(3), beta(3), gamma(1), delta(1), epsilon(1). CF(0) has three main subunits: a, b and c.

The protein localises to the cell inner membrane. In terms of biological role, produces ATP from ADP in the presence of a proton gradient across the membrane. The gamma chain is believed to be important in regulating ATPase activity and the flow of protons through the CF(0) complex. This chain is ATP synthase gamma chain, found in Shewanella amazonensis (strain ATCC BAA-1098 / SB2B).